The primary structure comprises 65 residues: Photosystem II reaction center protein Z (65 aa).

The next 2 membrane-spanning stretches (helical) occupy residues 11 to 31 (LVLALIIFSFILVLTLPVIFA) and 44 to 64 (WLACRFWFFLVFLIGILDGIF).

Belongs to the PsbZ family. In terms of assembly, PSII is composed of 1 copy each of membrane proteins PsbA, PsbB, PsbC, PsbD, PsbE, PsbF, PsbH, PsbI, PsbJ, PsbK, PsbL, PsbM, PsbT, PsbY, PsbZ, Psb30/Ycf12, at least 3 peripheral proteins of the oxygen-evolving complex and a large number of cofactors. It forms dimeric complexes.

The protein resides in the plastid. It localises to the chloroplast thylakoid membrane. In terms of biological role, may control the interaction of photosystem II (PSII) cores with the light-harvesting antenna, regulates electron flow through the 2 photosystem reaction centers. PSII is a light-driven water plastoquinone oxidoreductase, using light energy to abstract electrons from H(2)O, generating a proton gradient subsequently used for ATP formation. The polypeptide is Photosystem II reaction center protein Z (Euglena gracilis).